The following is a 276-amino-acid chain: Borealin (276 aa).

The disordered stretch occupies residues 111–158 (KEAKSSANSEDENMAPLKSTMKKKKASKKAPSTSKKPRTLSISKQGGT).

Belongs to the borealin family. Component of the CPC complex.

Its subcellular location is the nucleus. The protein resides in the chromosome. It is found in the centromere. The protein localises to the cytoplasm. It localises to the cytoskeleton. Its subcellular location is the spindle. Functionally, component of the chromosomal passenger complex (CPC), a complex that acts as a key regulator of mitosis. The CPC complex has essential functions at the centromere in ensuring correct chromosome alignment and segregation and is required for chromatin-induced microtubule stabilization and spindle assembly. The chain is Borealin (cdca8) from Danio rerio (Zebrafish).